The following is a 464-amino-acid chain: Calcitonin gene-related peptide type 1 receptor (464 aa).

Residues 1 to 23 (MMDKKCTLCFLFLLLLNMALIAA) form the signal peptide. At 24-139 (ESEEGANQTD…STHEKVKTAL (116 aa)) the chain is on the extracellular side. N30, N66, N118, N123, N128, and N129 each carry an N-linked (GlcNAc...) asparagine glycan. Intrachain disulfides connect C48-C74, C65-C105, and C88-C127. The chain crosses the membrane as a helical span at residues 140-164 (NLFYLTIIGHGLSIASLIISLIIFF). The Cytoplasmic portion of the chain corresponds to 165-175 (YFKSLSCQRIT). A helical membrane pass occupies residues 176–198 (LHKNLFFSFVCNSIVTIIHLTAV). Residues 199–209 (ANNQALVATNP) are Extracellular-facing. Residues 210-238 (VSCKVSQFIHLYLMGCNYFWMLCEGIYLH) traverse the membrane as a helical segment. At 239–252 (TLIVVAVFAEKQHL) the chain is on the cytoplasmic side. A helical transmembrane segment spans residues 253–273 (MWYYFLGWGFPLLPACIHAIA). The Extracellular portion of the chain corresponds to 274-289 (RSLYYNDNCWISSDTH). Residues 288-289 (TH) are required for RAMP3 interaction. A helical membrane pass occupies residues 290 to 314 (LLYIIHGPICAALLVNLFFLLNIVR). Residues 315-329 (VLITKLKVTHQAESN) lie on the Cytoplasmic side of the membrane. Residues 330 to 351 (LYMKAVRATLILVPLLGIEFVL) form a helical membrane-spanning segment. The Extracellular portion of the chain corresponds to 352–366 (FPWRPEGKVAEEVYD). Residues 367 to 387 (YVMHILMHYQGLLVSTIFCFF) form a helical membrane-spanning segment. The Cytoplasmic portion of the chain corresponds to 388-464 (NGEVQAILRR…KPEKMYDLVM (77 aa)). Phosphoserine occurs at positions 420 and 445.

This sequence belongs to the G-protein coupled receptor 2 family. In terms of assembly, heterodimer of CALCRL and RAMP1; the receptor complex functions as CGRP receptor. Heterodimer of CALCRL and RAMP2 or CALCRL and RAMP3; the complexes function as adrenomedullin receptor.

Its subcellular location is the cell membrane. In terms of biological role, g protein-coupled receptor which specificity is determined by its interaction with receptor-activity-modifying proteins (RAMPs). Together with RAMP1, form the receptor complex for calcitonin-gene-related peptides CALCA/CGRP1 and CALCB/CGRP2. Together with RAMP2 or RAMP3, function as receptor complexes for adrenomedullin (ADM and ADM2). Ligand binding causes a conformation change that triggers signaling via guanine nucleotide-binding proteins (G proteins) and modulates the activity of downstream effectors. Activates cAMP-dependent pathway. In Rattus norvegicus (Rat), this protein is Calcitonin gene-related peptide type 1 receptor.